The following is a 510-amino-acid chain: ATP synthase subunit alpha (510 aa).

Glycine 170–threonine 177 lines the ATP pocket.

Belongs to the ATPase alpha/beta chains family. F-type ATPases have 2 components, CF(1) - the catalytic core - and CF(0) - the membrane proton channel. CF(1) has five subunits: alpha(3), beta(3), gamma(1), delta(1), epsilon(1). CF(0) has three main subunits: a(1), b(2) and c(9-12). The alpha and beta chains form an alternating ring which encloses part of the gamma chain. CF(1) is attached to CF(0) by a central stalk formed by the gamma and epsilon chains, while a peripheral stalk is formed by the delta and b chains.

The protein localises to the cell inner membrane. The enzyme catalyses ATP + H2O + 4 H(+)(in) = ADP + phosphate + 5 H(+)(out). Functionally, produces ATP from ADP in the presence of a proton gradient across the membrane. The alpha chain is a regulatory subunit. The protein is ATP synthase subunit alpha of Caulobacter vibrioides (strain ATCC 19089 / CIP 103742 / CB 15) (Caulobacter crescentus).